The primary structure comprises 67 residues: ATP synthase protein 8 (67 aa).

The chain crosses the membrane as a helical span at residues threonine 8 to phenylalanine 24. Position 54 is an N6-acetyllysine; alternate (lysine 54). An N6-succinyllysine; alternate modification is found at lysine 54. An N6-acetyllysine modification is found at lysine 57.

It belongs to the ATPase protein 8 family. F-type ATPases have 2 components, CF(1) - the catalytic core - and CF(0) - the membrane proton channel. Component of an ATP synthase complex composed of ATP5PB, ATP5MC1, ATP5F1E, ATP5PD, ATP5ME, ATP5PF, ATP5MF, MT-ATP6, MT-ATP8, ATP5F1A, ATP5F1B, ATP5F1D, ATP5F1C, ATP5PO, ATP5MG, ATP5MK and ATP5MJ. Interacts with PRICKLE3.

Its subcellular location is the mitochondrion membrane. Mitochondrial membrane ATP synthase (F(1)F(0) ATP synthase or Complex V) produces ATP from ADP in the presence of a proton gradient across the membrane which is generated by electron transport complexes of the respiratory chain. F-type ATPases consist of two structural domains, F(1) - containing the extramembraneous catalytic core and F(0) - containing the membrane proton channel, linked together by a central stalk and a peripheral stalk. During catalysis, ATP synthesis in the catalytic domain of F(1) is coupled via a rotary mechanism of the central stalk subunits to proton translocation. Part of the complex F(0) domain. Minor subunit located with subunit a in the membrane. This chain is ATP synthase protein 8 (MT-ATP8), found in Felis silvestris lybica (African wildcat).